We begin with the raw amino-acid sequence, 365 residues long: Protein BZR1 homolog 2 (365 aa).

Residues 1-30 (MATGGGGGGGGMGGGGVGGGAGAAGVGVGG) are compositionally biased toward gly residues. 4 disordered regions span residues 1–45 (MATG…KRRE), 113–154 (SPSP…NMAN), 191–236 (SAPV…TPPS), and 344–365 (HEDS…RAAA). Positions 31 to 113 (RMPTWREREN…RMEVIGCSVS (83 aa)) are required for DNA-binding. Over residues 113-144 (SPSPCSSYQPSPRASYNASPTSSSFPSGASSP) the composition is skewed to low complexity. 2 stretches are compositionally biased toward polar residues: residues 215–233 (SNVQ…VNST) and 356–365 (LGSSRTRAAA).

This sequence belongs to the BZR/LAT61 family. In terms of assembly, interacts with PUB24.

Functionally, may function in brassinosteroid signaling. The polypeptide is Protein BZR1 homolog 2 (Oryza sativa subsp. japonica (Rice)).